Here is a 548-residue protein sequence, read N- to C-terminus: Alpha-1,3-mannosyl-glycoprotein 4-beta-N-acetylglucosaminyltransferase B (548 aa).

Residues M1–T7 are Cytoplasmic-facing. Residues F8–L28 form a helical; Signal-anchor for type II membrane protein membrane-spanning segment. Over S29–D548 the chain is Lumenal. The stretch at V36 to D83 forms a coiled coil. Residues N87 and N103 are each glycosylated (N-linked (GlcNAc...) asparagine).

The protein belongs to the glycosyltransferase 54 family. Interacts with SLC35A3. It depends on a divalent metal cation as a cofactor. In terms of processing, N-glycosylated. Widely expressed. Strongly overexpressed in pancreatic cancer.

It is found in the golgi apparatus membrane. It catalyses the reaction an N(4)-{beta-D-GlcNAc-(1-&gt;2)-alpha-D-Man-(1-&gt;3)-[alpha-D-Man-(1-&gt;6)]-beta-D-Man-(1-&gt;4)-beta-D-GlcNAc-(1-&gt;4)-beta-D-GlcNAc}-L-asparaginyl-[protein] + UDP-N-acetyl-alpha-D-glucosamine = an N(4)-{beta-D-GlcNAc-(1-&gt;2)-[beta-D-GlcNAc-(1-&gt;4)]-alpha-D-Man-(1-&gt;3)-[alpha-D-Man-(1-&gt;6)]-beta-D-Man-(1-&gt;4)-beta-D-GlcNAc-(1-&gt;4)-beta-D-GlcNAc}-L-asparaginyl-[protein] + UDP + H(+). The catalysed reaction is N(4)-{beta-D-GlcNAc-(1-&gt;2)-alpha-D-Man-(1-&gt;3)-[beta-D-GlcNAc-(1-&gt;2)-alpha-D-Man-(1-&gt;6)]-beta-D-Man-(1-&gt;4)-beta-D-GlcNAc-(1-&gt;4)-beta-D-GlcNAc}-L-asparaginyl-[protein] + UDP-N-acetyl-alpha-D-glucosamine = N(4)-{beta-D-GlcNAc-(1-&gt;2)-[beta-D-GlcNAc-(1-&gt;4)]-alpha-D-Man-(1-&gt;3)-[beta-D-GlcNAc-(1-&gt;2)-alpha-D-Man-(1-&gt;6)]-beta-D-Man-(1-&gt;4)-beta-D-GlcNAc-(1-&gt;4)-beta-D-GlcNAc}-L-asparaginyl-[protein] + UDP + H(+). The enzyme catalyses an N(4)-{beta-D-GlcNAc-(1-&gt;2)-alpha-D-Man-(1-&gt;3)-[beta-D-GlcNAc-(1-&gt;2)-[beta-D-GlcNAc-(1-&gt;6)]-alpha-D-Man-(1-&gt;6)]-beta-D-Man-(1-&gt;4)-beta-D-GlcNAc-(1-&gt;4)-beta-D-GlcNAc}-L-asparaginyl-[protein] + UDP-N-acetyl-alpha-D-glucosamine = an N(4)-{beta-D-GlcNAc-(1-&gt;2)-[beta-D-GlcNAc-(1-&gt;4)]-alpha-D-Man-(1-&gt;3)-[beta-D-GlcNAc-(1-&gt;2)-[beta-D-GlcNAc-(1-&gt;6)]-alpha-D-Man-(1-&gt;6)]-beta-D-Man-(1-&gt;4)-beta-D-GlcNAc-(1-&gt;4)-beta-D-GlcNAc}-L-asparaginyl-[protein] + UDP + H(+). It carries out the reaction an N(4)-{beta-D-GlcNAc-(1-&gt;2)-alpha-D-Man-(1-&gt;3)-[beta-D-GlcNAc-(1-&gt;2)-alpha-D-Man-(1-&gt;6)]-beta-D-Man-(1-&gt;4)-beta-D-GlcNAc-(1-&gt;4)-[alpha-L-Fuc-(1-&gt;6)]-beta-D-GlcNAc}-L-asparaginyl-[protein] + UDP-N-acetyl-alpha-D-glucosamine = N(4)-{beta-D-GlcNAc-(1-&gt;2)-[beta-D-GlcNAc-(1-&gt;4)]-alpha-D-Man-(1-&gt;3)-[beta-D-GlcNAc-(1-&gt;2)-alpha-D-Man-(1-&gt;6)]-beta-D-Man-(1-&gt;4)-beta-D-GlcNAc-(1-&gt;4)-[alpha-L-Fuc-(1-&gt;6)]-beta-D-GlcNAc}-asparaginyl-[protein] + UDP + H(+). It catalyses the reaction an N(4)-{beta-D-GlcNAc-(1-&gt;2)-alpha-D-Man-(1-&gt;3)-[beta-D-Gal-(1-&gt;4)-beta-D-GlcNAc-(1-&gt;2)-alpha-D-Man-(1-&gt;6)]-beta-D-Man-(1-&gt;4)-beta-D-GlcNAc-(1-&gt;4)-beta-D-GlcNAc}-L-asparaginyl-[protein] + UDP-N-acetyl-alpha-D-glucosamine = an N(4)-{beta-D-GlcNAc-(1-&gt;2)-[beta-D-GlcNAc-(1-&gt;4)]-alpha-D-Man-(1-&gt;3)-[beta-D-Gal-(1-&gt;4)-beta-D-GlcNAc-(1-&gt;2)-alpha-D-Man-(1-&gt;6)]-beta-D-Man-(1-&gt;4)-beta-D-GlcNAc-(1-&gt;4)-beta-D-GlcNAc}-L-asparaginyl-[protein] + UDP + H(+). The catalysed reaction is N(4)-{beta-D-GlcNAc-(1-&gt;2)-alpha-D-Man-(1-&gt;3)-[alpha-D-Man-(1-&gt;3)-{alpha-D-Man-(1-&gt;6)}-alpha-D-Man-(1-&gt;6)]-beta-D-Man-(1-&gt;4)-beta-D-GlcNAc-(1-&gt;4)-beta-D-GlcNAc}-asparaginyl-[protein] + UDP-N-acetyl-alpha-D-glucosamine = N(4)-{beta-D-GlcNAc-(1-&gt;2)-[beta-D-GlcNAc-(1-&gt;4)]-alpha-D-Man-(1-&gt;3)-[alpha-D-Man-(1-&gt;3)-{alpha-D-Man-(1-&gt;6)}-alpha-D-Man-(1-&gt;6)]-beta-D-Man-(1-&gt;4)-beta-D-GlcNAc-(1-&gt;4)-beta-D-GlcNAc}-asparaginyl-[protein] + UDP + H(+). The enzyme catalyses N(4)-{beta-D-GlcNAc-(1-&gt;2)-alpha-D-Man-(1-&gt;3)-beta-D-Man-(1-&gt;4)-beta-D-GlcNAc-(1-&gt;4)-beta-D-GlcNAc}-asparaginyl-[protein] + UDP-N-acetyl-alpha-D-glucosamine = N(4)-{beta-D-GlcNAc-(1-&gt;2)-[beta-D-GlcNAc-(1-&gt;4)]-alpha-D-Man-(1-&gt;3)-beta-D-Man-(1-&gt;4)-beta-D-GlcNAc-(1-&gt;4)-beta-D-GlcNAc}-asparaginyl-[protein] + UDP + H(+). It functions in the pathway protein modification; protein glycosylation. Its function is as follows. Glycosyltransferase that catalyzes the transfer of GlcNAc from UDP-GlcNAc to the GlcNAcbeta1-2Manalpha1-3 arm of the core structure of N-linked glycans through a beta1-4 linkage and participates in the production of tri- and tetra-antennary N-linked sugar chains. Prefers complex-type N-glycans over hybrid-types. Has lower affinities for donors or acceptors than MGAT4A, suggesting that, under physiological conditions, it is not the main contributor in N-glycan biosynthesis. The polypeptide is Alpha-1,3-mannosyl-glycoprotein 4-beta-N-acetylglucosaminyltransferase B (Homo sapiens (Human)).